The chain runs to 667 residues: Heat shock protein DDB_G0283913 (667 aa).

2 helical membrane-spanning segments follow: residues 2–22 (FVGT…KKIL) and 224–244 (MFIC…LNEL). Residues 18–82 (IKKILKRKKE…ELAKKLNCYI (65 aa)) adopt a coiled-coil conformation. A disordered region spans residues 432-478 (IDDTIQDNDKSGSEVSTPTISSSSSSPLQPIIKDEKDDNIENKSDEA). Low complexity predominate over residues 444-457 (SEVSTPTISSSSSS). A compositionally biased stretch (basic and acidic residues) spans 463 to 477 (IKDEKDDNIENKSDE). One can recognise a sHSP domain in the interval 551 to 667 (MVFSSGFKPF…VITFKFEKIG (117 aa)).

Belongs to the small heat shock protein (HSP20) family.

The protein localises to the membrane. This chain is Heat shock protein DDB_G0283913, found in Dictyostelium discoideum (Social amoeba).